Here is a 356-residue protein sequence, read N- to C-terminus: Tricetin 3',4',5'-O-trimethyltransferase (356 aa).

123 to 129 serves as a coordination point for substrate; the sequence is MNQDKVL. A substrate binding region spans residues 155–173; sequence AFEYHGTDPRFNRVFNEGM. Residues Gly-201, Asp-224, Asp-244, Met-245, and Lys-258 each contribute to the S-adenosyl-L-methionine site. The active-site Proton acceptor is His-262.

The protein belongs to the class I-like SAM-binding methyltransferase superfamily. Cation-independent O-methyltransferase family. COMT subfamily. In terms of assembly, homodimer. The monomer is fully active and dimerization is not required for sequential methylation. Expressed in roots, stems and leaves.

It carries out the reaction tricetin + 3 S-adenosyl-L-methionine = 3',4',5'-O-trimethyltricetin + 3 S-adenosyl-L-homocysteine + 3 H(+). In terms of biological role, flavonoid B-ring-specific O-methyltransferase with a preference for flavones &gt; dihydroflavones &gt; flavonols that possess at least two B-ring hydroxyl groups. Active with tricetin, 5-hydroxyferulic acid, luteolin, quercitin, eriodictyol, quercetagetin, taxifolin, gossypetin and myricetin. No activity with naringenin, apigenin, kaempferol, 7,8-dihydroxy- or 5,7,8-trihydroxy flavones, chlorogenic acid, gallic acid or daphnetin. Catalyzes the sequential O-methylation of tricetin via 3'-O-methyltricetin, 3',5'-O-methyltricetin to 3',4',5'-O-trimethyltricetin. May also be involved in S lignin biosynthesis. The sequence is that of Tricetin 3',4',5'-O-trimethyltransferase (OMT2) from Triticum aestivum (Wheat).